A 467-amino-acid chain; its full sequence is MHSLSLISLALLSPLLVNAQLSGHVGPLTSSSSKASTKTCNVQDYGAKADKETDIGSAIEKAWDDCAEGGVVYIPSGDYAMFSRLKLSGGKASAIQLDGIIYRTGSDGGNLFMIEHSSDFEFFSSTSQGAIQGLGYEFHKDGSLNGPRLLRFYDVTDFSVHDVALVDSPAFHLSLDTCKNAEIYNMAIRGGDSGGLDGVDIWSENVWVHDVEVTNKDECVTVKSPAKNILVENIYCNWSGGCAMGSLGADTNISDVVYRNVYTWKSNQMYMIKSNGGSGSVSNLVLENFIGHGNAYSLDIDGEWSSMSTVSGDGVQLNNITVRNWKGTEEDGAARGPIKVVCAEKAPCTDITIDDFALWTESGDEQTYSCENGFGSGFCLQDGDGTSSYSTVITETAAPTGYEASSMSNDLSTAFGTDASIPIPTIPTSFFPGATPYSALAGAASGNAAKATSSATASRFRHRRGSH.

The signal sequence occupies residues 1–19 (MHSLSLISLALLSPLLVNA). The cysteines at positions 40 and 66 are disulfide-linked. Aspartate 217 (proton donor) is an active-site residue. Cysteine 219 and cysteine 236 are joined by a disulfide. N-linked (GlcNAc...) asparagine glycans are attached at residues asparagine 237 and asparagine 252. Histidine 292 is an active-site residue. Asparagine 319 carries N-linked (GlcNAc...) asparagine glycosylation. 2 disulfides stabilise this stretch: cysteine 342/cysteine 348 and cysteine 370/cysteine 379.

Belongs to the glycosyl hydrolase 28 family.

Its subcellular location is the secreted. The enzyme catalyses Endohydrolysis of alpha-D-GalA-(1-&gt;2)-alpha-L-Rha glycosidic bond in the rhamnogalacturonan I backbone with initial inversion of anomeric configuration releasing oligosaccharides with beta-D-GalA at the reducing end.. In terms of biological role, pectinolytic enzymes consist of four classes of enzymes: pectine lyase, polygalacturonase, pectin methylesterase and rhamnogalacturonase. Hydrolyzes alpha-D-galacturonopyranosyl-(1,2)-alpha-L-rhamnopyranosyl linkages in the backbone of the hairy regions of pectins. The sequence is that of Probable rhamnogalacturonase A (rhgA) from Aspergillus oryzae (strain ATCC 42149 / RIB 40) (Yellow koji mold).